The sequence spans 429 residues: Histidine--tRNA ligase (429 aa).

Belongs to the class-II aminoacyl-tRNA synthetase family. As to quaternary structure, homodimer.

The protein resides in the cytoplasm. It carries out the reaction tRNA(His) + L-histidine + ATP = L-histidyl-tRNA(His) + AMP + diphosphate + H(+). The sequence is that of Histidine--tRNA ligase from Streptococcus mutans serotype c (strain ATCC 700610 / UA159).